The primary structure comprises 702 residues: Sodium/hydrogen exchanger 6 (702 aa).

Transmembrane regions (helical) follow at residues 72-92, 104-124, 177-197, 212-232, 253-273, 279-299, 325-345, 373-393, 415-435, 437-457, 480-500, and 516-536; these read SANLLIFILLLTLTILTIWLF, GLAMIYGLLVGLVLRYGIHVP, VTFDPEVFFNILLPPIIFYAG, ILAYAFLGTAISCFVIGSIMY, CLLFGAIVSATDPVTVLAIFH, VELYALLFGESVLNDAVAIVL, IGIFLGIFSGSFAMGAATGVV, TFLLAEAWGFTGVVAVLFCGI, FELLNFLAENFIFSYMGLTLF, FQNHVFNPTFVVGAFIAIFLG, NFQHMMMFAGLRGAMAFALAI, and LLIVFFTVWVFGGGTTAMLSC.

Belongs to the monovalent cation:proton antiporter 1 (CPA1) transporter (TC 2.A.36) family. As to quaternary structure, homodimer. Interacts with RACK1; regulates the distribution of SLC9A6 between endosomes and the plasma membrane. Ubiquitinated (in vitro). In terms of processing, glycosylated.

The protein resides in the endosome membrane. The protein localises to the recycling endosome membrane. It is found in the early endosome membrane. Its subcellular location is the late endosome membrane. It localises to the cell membrane. It catalyses the reaction Na(+)(in) + H(+)(out) = Na(+)(out) + H(+)(in). The catalysed reaction is K(+)(in) + H(+)(out) = K(+)(out) + H(+)(in). Endosomal Na(+), K(+)/H(+) antiporter. Mediates the electroneutral exchange of endosomal luminal H(+) for a cytosolic Na(+) or K(+). By facilitating proton efflux, SLC9A6 counteracts the acidity generated by vacuolar (V)-ATPase, thereby limiting luminal acidification. Responsible for alkalizing and maintaining the endosomal pH, and consequently in, e.g., endosome maturation and trafficking of recycling endosomal cargo. Plays a critical role during neurodevelopment by regulating synaptic development and plasticity. Implicated in the maintenance of cell polarity in a manner that is dependent on its ability to modulate intravesicular pH. Regulates intracelular pH in some specialized cells, osteoclasts and stereocilia where this transporter localizes to the plasma membrane. This Mus musculus (Mouse) protein is Sodium/hydrogen exchanger 6 (Slc9a6).